A 619-amino-acid chain; its full sequence is MAAAPPLSKAEYLKRYLSGADAGVDRGSESGRKRRKKRPKPGGAGGKGMRIVDDDVSWTAISTTKLEKEEEEDDGDLPVVAEFVDERPEEVKQMEAFRSSAKWKLLGGHNEDLPSNRHFRHDTPDSSPRRVRHGTPDPSPRKDRHDTPDPSPRRARHDTPDPSPLRGARHDSDTSPPRRIRHDSSDTSPPRRARHDSPDPSPPRRPQHNSSGASPRRVRHDSPDPSPPRRARHGSSDISSPRRVHNNSPDTSRRTLGSSDTQQLRRARHDSPDLAPNVTYSLPRTKSGKAPERASSKTSPHWKESGASHLSFPKNSKYEYDPDISPPRKKQAKSHFGDKKQLDSKGDCQKATDSDLSSPRHKQSPGHQDSDSDLSPPRNRPRHRSSDSDLSPPRRRQRTKSSDSDLSPPRRSQPPGKKAAHMYSGAKTGLVLTDIQREQQELKEQDQETMAFEAEFQYAETVFRDKSGRKRNLKLERLEQRRKAEKDSERDELYAQWGKGLAQSRQQQQNVEDAMKEMQKPLARYIDDEDLDRMLREQEREGDPMANFIKKNKAKENKNKKVRPRYSGPAPPPNRFNIWPGYRWDGVDRSNGFEQKRFARLASKKAVEELAYKWSVEDM.

Residues 20–56 are disordered; it reads ADAGVDRGSESGRKRRKKRPKPGGAGGKGMRIVDDDV. Residue serine 28 is modified to Phosphoserine. Lysine 65 participates in a covalent cross-link: Glycyl lysine isopeptide (Lys-Gly) (interchain with G-Cter in SUMO2). A disordered region spans residues 106-429; it reads LGGHNEDLPS…AHMYSGAKTG (324 aa). The segment covering 109-128 has biased composition (basic and acidic residues); sequence HNEDLPSNRHFRHDTPDSSP. Phosphothreonine is present on threonine 123. Phosphoserine is present on serine 127. Threonine 135 bears the Phosphothreonine mark. At serine 139 the chain carries Phosphoserine. Residues 139–160 are compositionally biased toward basic and acidic residues; that stretch reads SPRKDRHDTPDPSPRRARHDTP. Position 147 is a phosphothreonine (threonine 147). Serine 151 carries the phosphoserine modification. Threonine 159 is modified (phosphothreonine). 16 positions are modified to phosphoserine: serine 163, serine 172, serine 175, serine 197, serine 201, serine 214, serine 222, serine 226, serine 235, serine 236, serine 240, serine 248, serine 258, serine 259, serine 271, and serine 281. A compositionally biased stretch (polar residues) spans 246-264; sequence NNSPDTSRRTLGSSDTQQL. Positions 289 to 306 are enriched in basic and acidic residues; it reads KAPERASSKTSPHWKESG. Serine 325 carries the post-translational modification Phosphoserine. The span at 335–353 shows a compositional bias: basic and acidic residues; sequence HFGDKKQLDSKGDCQKATD. Phosphoserine is present on residues serine 354, serine 357, serine 358, serine 391, and serine 407. The span at 404 to 415 shows a compositional bias: low complexity; it reads SDLSPPRRSQPP. Residues 433 to 520 adopt a coiled-coil conformation; it reads TDIQREQQEL…VEDAMKEMQK (88 aa). A Phosphotyrosine modification is found at tyrosine 494. Residues 538-578 form a disordered region; that stretch reads QEREGDPMANFIKKNKAKENKNKKVRPRYSGPAPPPNRFNI. Serine 567 is modified (phosphoserine).

The protein belongs to the CWC26 family. As to quaternary structure, part of the activated spliceosome B/catalytic step 1 spliceosome, one of the forms of the spliceosome which has a well-formed active site but still cannot catalyze the branching reaction and is composed of at least 52 proteins, the U2, U5 and U6 snRNAs and the pre-mRNA. Component of the minor spliceosome, which splices U12-type introns.

The protein resides in the nucleus. In terms of biological role, involved in pre-mRNA splicing as component of the activated spliceosome. As a component of the minor spliceosome, involved in the splicing of U12-type introns in pre-mRNAs. The polypeptide is BUD13 homolog (BUD13) (Homo sapiens (Human)).